An 84-amino-acid polypeptide reads, in one-letter code: Conotoxin Am6.1 (84 aa).

Residues 1 to 19 (MEKLTILLLVAAVLMSTHA) form the signal peptide. Residues 20–47 (MFQGGGEKSRKAINFSETRKLARNKQKR) constitute a propeptide that is removed on maturation. 3 disulfides stabilise this stretch: cysteine 48–cysteine 62, cysteine 55–cysteine 66, and cysteine 61–cysteine 71. Position 51 is a 6'-bromotryptophan; in Am6.1b (tryptophan 51). Residues glutamate 60 and glutamate 64 each carry the 4-carboxyglutamate; partial; in Am6.1b and Am6.1c modification. The propeptide occupies 78-84 (RTTSHPI).

The protein belongs to the conotoxin O2 family. In terms of processing, three forms of this peptides have been described. The unmodified Am6.1a (Am3286) is not detected in the venom; Am6.1b (Am3408) is only Trp brominated, while Am6.1c (Am3452) is both Trp brominated and Glu gamma-carboxyglutamated. Both Am6.1b and Am6.1c are detected in the venom. In terms of tissue distribution, expressed by the venom duct.

It is found in the secreted. Functionally, gamma-conotoxins may act on voltage-gated non-specific cation pacemaker channels (HCN). The sequence is that of Conotoxin Am6.1 from Conus amadis (Amadis cone).